Reading from the N-terminus, the 295-residue chain is ATP synthase gamma chain (295 aa).

The protein belongs to the ATPase gamma chain family. F-type ATPases have 2 components, CF(1) - the catalytic core - and CF(0) - the membrane proton channel. CF(1) has five subunits: alpha(3), beta(3), gamma(1), delta(1), epsilon(1). CF(0) has three main subunits: a, b and c.

It localises to the cell inner membrane. In terms of biological role, produces ATP from ADP in the presence of a proton gradient across the membrane. The gamma chain is believed to be important in regulating ATPase activity and the flow of protons through the CF(0) complex. This chain is ATP synthase gamma chain, found in Sulfurimonas denitrificans (strain ATCC 33889 / DSM 1251) (Thiomicrospira denitrificans (strain ATCC 33889 / DSM 1251)).